The following is a 722-amino-acid chain: Bifunctional UDP-N-acetylglucosamine 2-epimerase/N-acetylmannosamine kinase (722 aa).

Residues Arg-19, Ser-23, Arg-113, His-220, and Asn-253 each contribute to the UDP site. CMP-N-acetyl-beta-neuraminate-binding residues include Lys-259, Glu-271, Lys-280, and His-281. Val-282, Ser-301, Ser-302, Glu-307, and Arg-321 together coordinate UDP. Residues 406–722 (TLSALAVDLG…VLDYTTRRIH (317 aa)) form an N-acetylmannosamine kinase region. Asp-413 contacts Mg(2+). Gly-416 lines the an N-acyl-D-mannosamine 6-phosphate pocket. Residues Thr-417, Asn-418, and Arg-420 each contribute to the ADP site. 6 residues coordinate an N-acyl-D-mannosamine 6-phosphate: Gly-476, Arg-477, Thr-489, Asn-516, Asp-517, and Gly-545. An N-acyl-D-mannosamine is bound by residues Gly-476, Arg-477, Thr-489, Asn-516, and Asp-517. Residue Asp-517 is part of the active site. An N-acyl-D-mannosamine-binding residues include Glu-566 and His-569. An N-acyl-D-mannosamine 6-phosphate is bound at residue His-569. Zn(2+) is bound by residues His-569, Cys-579, Cys-581, and Cys-586. Glu-588 lines the an N-acyl-D-mannosamine 6-phosphate pocket. Glu-588 serves as a coordination point for an N-acyl-D-mannosamine.

The protein in the N-terminal section; belongs to the UDP-N-acetylglucosamine 2-epimerase family. It in the C-terminal section; belongs to the ROK (NagC/XylR) family. As to quaternary structure, homodimer. Homotetramer. Homohexamer. The hexameric form exhibits both enzyme activities, whereas the dimeric form only catalyzes the phosphorylation of N-acyl-D-mannosamine. In terms of processing, phosphorylated. Phosphorylation by PKC activates the UDP-N-acetylglucosamine 2-epimerase activity. Widely expressed. Highest expression in liver. Also found at high levels in lung, brain and kidney.

Its subcellular location is the cytoplasm. It is found in the cytosol. It catalyses the reaction UDP-N-acetyl-alpha-D-glucosamine + H2O = aldehydo-N-acetyl-D-mannosamine + UDP + H(+). The catalysed reaction is an N-acyl-D-mannosamine + ATP = an N-acyl-D-mannosamine 6-phosphate + ADP + H(+). It functions in the pathway amino-sugar metabolism; N-acetylneuraminate biosynthesis. The UDP-N-acetylglucosamine 2-epimerase activity, in contrast to the N-acetylmannosamine kinase activity, exhibits allosteric regulation by cytidine monophosphate-N-acetylneuraminic acid (CMP-Neu5Ac), the end product of neuraminic acid biosynthesis. Moreover, the activity is contingent upon the oligomeric state of the enzyme. The monomeric form is inactive, while the dimeric form selectively catalyzes the phosphorylation of N-acetylmannosamine. The hexameric form, on the other hand, demonstrates full proficiency in both enzyme activities. Furthermore, the UDP-N-acetylglucosamine 2-epimerase activity is increased by PKC-mediated phosphorylation. Its function is as follows. Bifunctional enzyme that possesses both UDP-N-acetylglucosamine 2-epimerase and N-acetylmannosamine kinase activities, and serves as the initiator of the biosynthetic pathway leading to the production of N-acetylneuraminic acid (NeuAc), a critical precursor in the synthesis of sialic acids. By catalyzing this pivotal and rate-limiting step in sialic acid biosynthesis, this enzyme assumes a pivotal role in governing the regulation of cell surface sialylation, playing a role in embryonic angiogenesis. Sialic acids represent a category of negatively charged sugars that reside on the surface of cells as terminal components of glycoconjugates and mediate important functions in various cellular processes, including cell adhesion, signal transduction, and cellular recognition. This is Bifunctional UDP-N-acetylglucosamine 2-epimerase/N-acetylmannosamine kinase from Mus musculus (Mouse).